Here is a 351-residue protein sequence, read N- to C-terminus: Selenide, water dikinase (351 aa).

U15 is an active-site residue. U15 is a non-standard amino acid (selenocysteine). ATP is bound by residues K18 and 47–49 (DNE). D50 contributes to the Mg(2+) binding site. ATP contacts are provided by residues D67, D90, and 138-140 (GHS). Position 90 (D90) interacts with Mg(2+). Position 227 (D227) interacts with Mg(2+).

Belongs to the selenophosphate synthase 1 family. Class I subfamily. In terms of assembly, homodimer. Mg(2+) is required as a cofactor.

It carries out the reaction hydrogenselenide + ATP + H2O = selenophosphate + AMP + phosphate + 2 H(+). Functionally, synthesizes selenophosphate from selenide and ATP. This is Selenide, water dikinase from Nitratidesulfovibrio vulgaris (strain DP4) (Desulfovibrio vulgaris).